The following is a 337-amino-acid chain: MDWLGNRVSVGNIALLAIGASMGFIAKTSTLSKPEAPNTVQQYGYCKKLSSEKRNQAAGCPYEYLVSIYGRHHFESLVKEFNPLLKQEDPVKYDLVLEIMDAVHFALILVDDISDDSYQRKNQPTAHLIYGASETANRAYLVLTGVINRALRERPVLGAELLKALEDILQGQDLSLVWRRDGLKSFQYQGDESIAAYKNMASLKTGTLFVLLGRLLNDGGNELDDLLSRFGWFAQLQNDCKNIYSAEYATNKGAVAEDLRNGELSYPIVIALNDNSTSRVMERALASHAEADVEEALQALQSKPVRDACMRALQQASVGLEKLVLLWGRREKMQAGS.

Mg(2+) is bound by residues aspartate 111 and aspartate 115.

The protein belongs to the FPP/GGPP synthase family. Mg(2+) serves as cofactor.

It participates in secondary metabolite biosynthesis. Functionally, prenyltransferase; part of the gene cluster that mediates the biosynthesis of terpendoles, indole-diterpene (IDT) mycotoxins including terpendole I, terpendole K, terpendole C, as well as the kinesin Eg5 inhibitor terpendole E. Terpendoles biosynthesis begins with the synthesis of geranylgeranyl diphosphate (GGPP) by a yet unidentified GGPP synthase. Condensation of indole-3-glycerol phosphate with GGPP by the prenyltransferase terC then forms 3-geranylgeranylindole (3-GGI), followed by epoxidation and cyclization of this intermediate (by the FAD-dependent monooxygeanse terM and the terpene cyclase terB) to form paspaline. The cytochrome monooxygenase terQ then hydroxylates paspalline at C-11 to yield terpendole E. The cytochrome monooxygenase terP converts terpendole E to 13-desoxyterpendole I, and terQ converts 13-desoxyterpendole I into terpendole I. TerF and terK are required for conversion of terpendole I to terpendole C which is further converted to terpendole K. In Tolypocladium album (Soil fungus), this protein is Prenyltransferase terC.